Consider the following 521-residue polypeptide: Phosphoenolpyruvate carboxykinase (ATP) (521 aa).

3 residues coordinate substrate: Arg-52, Tyr-186, and Lys-192. Residues Lys-192, His-211, and 227 to 235 (GLSGTGKTT) each bind ATP. Positions 192 and 211 each coordinate Mn(2+). Mn(2+) is bound at residue Asp-248. ATP is bound by residues Glu-276, Arg-313, 432 to 433 (RI), and Thr-438. A substrate-binding site is contributed by Arg-313.

This sequence belongs to the phosphoenolpyruvate carboxykinase (ATP) family. It depends on Mn(2+) as a cofactor.

The protein resides in the cytoplasm. It carries out the reaction oxaloacetate + ATP = phosphoenolpyruvate + ADP + CO2. Its pathway is carbohydrate biosynthesis; gluconeogenesis. Its function is as follows. Involved in the gluconeogenesis. Catalyzes the conversion of oxaloacetate (OAA) to phosphoenolpyruvate (PEP) through direct phosphoryl transfer between the nucleoside triphosphate and OAA. In Caldanaerobacter subterraneus subsp. tengcongensis (strain DSM 15242 / JCM 11007 / NBRC 100824 / MB4) (Thermoanaerobacter tengcongensis), this protein is Phosphoenolpyruvate carboxykinase (ATP).